Consider the following 210-residue polypeptide: Probable GTP-binding protein EngB (210 aa).

The EngB-type G domain occupies 25–199 (TGIEVAFAGR…RQKLDTWFSE (175 aa)). GTP contacts are provided by residues 33 to 40 (GRSNAGKS), 60 to 64 (GRTQL), 78 to 81 (DLPG), 145 to 148 (TKTD), and 178 to 180 (FSS). 2 residues coordinate Mg(2+): Ser40 and Thr62.

It belongs to the TRAFAC class TrmE-Era-EngA-EngB-Septin-like GTPase superfamily. EngB GTPase family. The cofactor is Mg(2+).

Functionally, necessary for normal cell division and for the maintenance of normal septation. This Escherichia coli O6:K15:H31 (strain 536 / UPEC) protein is Probable GTP-binding protein EngB.